A 565-amino-acid chain; its full sequence is DNA repair protein RAD7 (565 aa).

Disordered regions lie at residues 1-22 (MYRS…PNSA) and 41-68 (WYQR…FTAE). Residues 1-200 (MYRSRNRPKR…SKLVFNKLRD (200 aa)) form a hydrophilic region. Over residues 47–62 (KKQEDATDEKKGKAED) the composition is skewed to basic and acidic residues. 2 positions are modified to phosphoserine: Ser64 and Ser85. The tract at residues 105 to 137 (ADSDEEEYETSHISDTPVSLSSANDRESLTKKR) is disordered. The segment covering 115-127 (SHISDTPVSLSSA) has biased composition (polar residues).

This sequence to S.pombe SpCC613.14. In terms of assembly, component of the global genome repair (GGR) complex composed of at least ABF1, RAD7 and RAD16. Interacts with ELC1.

Component of the global genome repair (GGR) complex which promotes global genome nucleotide excision repair (GG-NER) which removes DNA damage from nontranscribing DNA. This protein is one of 10 proteins (RAD1, 2,3,4,7,10,14, 16,23 and MMS19) involved in excision repair of DNA damaged with UV light, bulky adducts, or cross-linking agents. This chain is DNA repair protein RAD7 (RAD7), found in Saccharomyces cerevisiae (strain ATCC 204508 / S288c) (Baker's yeast).